We begin with the raw amino-acid sequence, 366 residues long: Ubiquitin carboxyl-terminal hydrolase 46 (366 aa).

A USP domain is found at 35 to 365 (FGLVNFGNTC…SGYILFYQSR (331 aa)). Cys-44 functions as the Nucleophile in the catalytic mechanism. Zn(2+) contacts are provided by Cys-182, Cys-185, Cys-229, and Cys-232. His-313 (proton acceptor) is an active-site residue.

The protein belongs to the peptidase C19 family. USP12/USP46 subfamily. In terms of assembly, interacts with WDR48. Interacts with WDR20. Interacts with DMWD. Component of the USP46/WDR20/WDR48 deubiquitinating complex. As to expression, detected in lung and spleen, and at lower levels in brain, kidney, testis and liver.

It localises to the cytoplasm. It carries out the reaction Thiol-dependent hydrolysis of ester, thioester, amide, peptide and isopeptide bonds formed by the C-terminal Gly of ubiquitin (a 76-residue protein attached to proteins as an intracellular targeting signal).. Its function is as follows. Deubiquitinating enzyme that plays a role in behavior, possibly by regulating GABA action. May act by mediating the deubiquitination of GAD1/GAD67. Has almost no deubiquitinating activity by itself and requires the interaction with WDR48 to have a high activity. Not involved in deubiquitination of monoubiquitinated FANCD2. The chain is Ubiquitin carboxyl-terminal hydrolase 46 from Rattus norvegicus (Rat).